The sequence spans 160 residues: Type-1 angiotensin II receptor-associated protein (160 aa).

The Extracellular segment spans residues 1–9 (MELPAVNLK). The chain crosses the membrane as a helical span at residues 10-30 (VILLVHWLLTTWGCLAFSGSY). Residues 31–53 (AWGNFTILALGVWAVAQRDSVDA) lie on the Cytoplasmic side of the membrane. A helical transmembrane segment spans residues 54–74 (IGMFLGGLVATIFLDIIYISI). Over 75 to 86 (FYSSVAVGDTGR) the chain is Extracellular. Residues 87–107 (FSAGMAIFSLLLKPFSCCLVY) form a helical membrane-spanning segment. Over 108–160 (HMHRERGGELPLRSDFFGPSQEHSAYQTIDSSDSPADPLASLENKGQAAPRGY) the chain is Cytoplasmic. Positions 110–122 (HRERGGELPLRSD) are interaction with AGTR1. Ser127 bears the Phosphoserine mark. The segment at 128 to 160 (QEHSAYQTIDSSDSPADPLASLENKGQAAPRGY) is disordered. Thr135 is subject to Phosphothreonine. The segment covering 137 to 149 (DSSDSPADPLASL) has biased composition (low complexity). Residue Ser138 is modified to Phosphoserine.

In terms of assembly, interacts with RACK1, and with the carboxy-terminal region of AGTR1.

It is found in the endoplasmic reticulum membrane. The protein resides in the golgi apparatus membrane. The protein localises to the cytoplasmic vesicle membrane. Its function is as follows. Appears to be a negative regulator of type-1 angiotensin II receptor-mediated signaling by regulating receptor internalization as well as mechanism of receptor desensitization such as phosphorylation. May play a role of negative regulator in cardiomyocyte hypertrophy induced by angiotensin II through an inhibition of p38 mitogen-activated protein kinase pathway. Attenuates type-1 angiotensin II receptor growth promoting effect and angiotensin II-induced phosphorylation of protein kinase AKT and of STAT3. The sequence is that of Type-1 angiotensin II receptor-associated protein (Agtrap) from Rattus norvegicus (Rat).